We begin with the raw amino-acid sequence, 418 residues long: Glutamyl-tRNA reductase (418 aa).

Substrate-binding positions include 51–54 (TCNR), S107, 112–114 (EPQ), and Q118. Catalysis depends on C52, which acts as the Nucleophile. 187–192 (GAGETA) contributes to the NADP(+) binding site.

The protein belongs to the glutamyl-tRNA reductase family. As to quaternary structure, homodimer.

The enzyme catalyses (S)-4-amino-5-oxopentanoate + tRNA(Glu) + NADP(+) = L-glutamyl-tRNA(Glu) + NADPH + H(+). It functions in the pathway porphyrin-containing compound metabolism; protoporphyrin-IX biosynthesis; 5-aminolevulinate from L-glutamyl-tRNA(Glu): step 1/2. Its function is as follows. Catalyzes the NADPH-dependent reduction of glutamyl-tRNA(Glu) to glutamate 1-semialdehyde (GSA). The chain is Glutamyl-tRNA reductase from Dichelobacter nodosus (strain VCS1703A).